Here is a 409-residue protein sequence, read N- to C-terminus: Tyrosine--tRNA ligase (409 aa).

L-tyrosine is bound at residue Tyr35. A 'HIGH' region motif is present at residues 40 to 49; it reads CTAESLHVGS. L-tyrosine-binding residues include Tyr172 and Gln176. The short motif at 232–236 is the 'KMSKS' region element; the sequence is KMGKT. Lys235 is an ATP binding site. Residues 343 to 409 enclose the S4 RNA-binding domain; the sequence is ISILDLVILS…KKKHIKVELI (67 aa).

Belongs to the class-I aminoacyl-tRNA synthetase family. TyrS type 1 subfamily. In terms of assembly, homodimer.

Its subcellular location is the cytoplasm. It catalyses the reaction tRNA(Tyr) + L-tyrosine + ATP = L-tyrosyl-tRNA(Tyr) + AMP + diphosphate + H(+). Catalyzes the attachment of tyrosine to tRNA(Tyr) in a two-step reaction: tyrosine is first activated by ATP to form Tyr-AMP and then transferred to the acceptor end of tRNA(Tyr). This chain is Tyrosine--tRNA ligase, found in Pelagibacter ubique (strain HTCC1062).